A 679-amino-acid chain; its full sequence is Protein FAM178B (679 aa).

The segment at 70 to 113 (PLDQGPRCPARRPCSPASAPAPTSPKKPKIQAPGETFPTDWSPP) is disordered. Low complexity predominate over residues 75 to 90 (PRCPARRPCSPASAPA).

It belongs to the FAM178 family.

The polypeptide is Protein FAM178B (Homo sapiens (Human)).